We begin with the raw amino-acid sequence, 571 residues long: Medium/long-chain-fatty-acid--CoA ligase FadD8 (571 aa).

Residues 1–22 (MSTAGDDAVGVPPACGGRSDAV) are disordered.

Belongs to the ATP-dependent AMP-binding enzyme family.

It carries out the reaction a medium-chain fatty acid + ATP + CoA = a medium-chain fatty acyl-CoA + AMP + diphosphate. The catalysed reaction is a long-chain fatty acid + ATP + CoA = a long-chain fatty acyl-CoA + AMP + diphosphate. The enzyme catalyses hexanoate + ATP + CoA = hexanoyl-CoA + AMP + diphosphate. It catalyses the reaction dodecanoate + ATP + CoA = dodecanoyl-CoA + AMP + diphosphate. It carries out the reaction hexadecanoate + ATP + CoA = hexadecanoyl-CoA + AMP + diphosphate. It participates in lipid metabolism; fatty acid metabolism. Catalyzes the activation of medium/long-chain fatty acids as acyl-coenzyme A (acyl-CoA). The protein is Medium/long-chain-fatty-acid--CoA ligase FadD8 of Mycobacterium tuberculosis (strain ATCC 25618 / H37Rv).